Reading from the N-terminus, the 397-residue chain is L-cysteine desulfidase (397 aa).

The active-site Proton acceptor is the C23. Residues C288, C330, and C337 each coordinate [4Fe-4S] cluster.

It belongs to the L-cysteine desulfidase family. Homotrimer. It depends on [4Fe-4S] cluster as a cofactor.

It carries out the reaction L-cysteine + H2O = hydrogen sulfide + pyruvate + NH4(+) + H(+). Functionally, catalyzes the cleavage of L-cysteine to form 2-aminoprop-2-enoate and sulfide. The former then spontaneously hydrolyzes to pyruvate and NH(3). May be responsible for the production of sulfide required for the biosynthesis of iron-sulfur centers in this archaea. The chain is L-cysteine desulfidase from Methanococcus maripaludis (strain C7 / ATCC BAA-1331).